We begin with the raw amino-acid sequence, 495 residues long: Probable cytosol aminopeptidase (495 aa).

Mn(2+)-binding residues include K258 and D263. Residue K270 is part of the active site. The Mn(2+) site is built by D281, D340, and E342. Residue R344 is part of the active site.

It belongs to the peptidase M17 family. It depends on Mn(2+) as a cofactor.

The protein resides in the cytoplasm. The enzyme catalyses Release of an N-terminal amino acid, Xaa-|-Yaa-, in which Xaa is preferably Leu, but may be other amino acids including Pro although not Arg or Lys, and Yaa may be Pro. Amino acid amides and methyl esters are also readily hydrolyzed, but rates on arylamides are exceedingly low.. It carries out the reaction Release of an N-terminal amino acid, preferentially leucine, but not glutamic or aspartic acids.. Presumably involved in the processing and regular turnover of intracellular proteins. Catalyzes the removal of unsubstituted N-terminal amino acids from various peptides. The polypeptide is Probable cytosol aminopeptidase (Leptospira interrogans serogroup Icterohaemorrhagiae serovar copenhageni (strain Fiocruz L1-130)).